Reading from the N-terminus, the 419-residue chain is E3 ubiquitin-protein ligase RNFT1 (419 aa).

The interval 1-120 (MKLRAQFDRG…SGESDLESGE (120 aa)) is disordered. Composition is skewed to polar residues over residues 31-44 (EPSS…SLTL) and 72-82 (GSSSGSTNGRG). Residues 84 to 102 (TSRRMRTASHSHSHTHGHG) are compositionally biased toward basic residues. Helical transmembrane passes span 141 to 161 (FIVI…AVAV), 187 to 207 (LHCA…FYTF), 217 to 237 (FFAN…SVGV), 240 to 260 (FILK…PCPL), 270 to 290 (YMLI…PLWF), and 303 to 323 (VGLT…LLAL). The tract at residues 352–403 (IREAGDICPICQADFKQPRVLVCQHIFCEECIAQWLNQERTCPLCRTVITDK) is required for ubiquitin ligase activity and for protection against ER stress-induced cell death. Residues 359 to 397 (CPICQADFKQPRVLVCQHIFCEECIAQWLNQERTCPLCR) form an RING-type zinc finger.

The protein resides in the endoplasmic reticulum membrane. The enzyme catalyses S-ubiquitinyl-[E2 ubiquitin-conjugating enzyme]-L-cysteine + [acceptor protein]-L-lysine = [E2 ubiquitin-conjugating enzyme]-L-cysteine + N(6)-ubiquitinyl-[acceptor protein]-L-lysine.. It functions in the pathway protein modification; protein ubiquitination. E3 ubiquitin-protein ligase that acts in the endoplasmic reticulum (ER)-associated degradation (ERAD) pathway, which targets misfolded proteins that accumulate in the endoplasmic reticulum (ER) for ubiquitination and subsequent proteasome-mediated degradation. Protects cells from ER stress-induced apoptosis. This chain is E3 ubiquitin-protein ligase RNFT1 (rnft1), found in Danio rerio (Zebrafish).